Consider the following 223-residue polypeptide: Translation initiation factor 6 (223 aa).

Belongs to the eIF-6 family.

In terms of biological role, binds to the 50S ribosomal subunit and prevents its association with the 30S ribosomal subunit to form the 70S initiation complex. This is Translation initiation factor 6 from Saccharolobus islandicus (strain M.16.27) (Sulfolobus islandicus).